The sequence spans 191 residues: GQGSLAYPGLRTQGNLETLGGPNDATRGLTSLADTFEHVIEELLDEQQVIQPSKENKDADLYSSRVMLSSQVPLEPPLLFLLEEYKNYLDAANMSMRVRRHSDPARRGELSVCDSTSEWVTAAEKKTAVDMSGATVTVLEKVPVPKGQLKQXFYETKCSSKGYAKEGCRGIDKRYWNSQCRTTQSYVRALT.

Positions 1-23 are disordered; that stretch reads GQGSLAYPGLRTQGNLETLGGPN. A propeptide spanning residues 1 to 100 is cleaved from the precursor; that stretch reads GQGSLAYPGL…AANMSMRVRR (100 aa). N-linked (GlcNAc...) asparagine glycosylation occurs at N93. A disulfide bridge connects residues C113 and C180.

Belongs to the NGF-beta family.

It is found in the secreted. In terms of biological role, promotes the survival of neuronal populations that are all located either in the central nervous system or directly connected to it. This Anilius scytale (Coral cylinder snake) protein is Neurotrophic factor BDNF precursor form (BDNF).